Here is a 365-residue protein sequence, read N- to C-terminus: Prostaglandin E2 receptor EP3 subtype (365 aa).

A disordered region spans residues 1–22 (MASMWAPEHSAEAHSNLSSTTD). The Extracellular portion of the chain corresponds to 1–30 (MASMWAPEHSAEAHSNLSSTTDDCGSVSVA). Residues 13–22 (AHSNLSSTTD) show a composition bias toward polar residues. The N-linked (GlcNAc...) asparagine glycan is linked to N16. A helical membrane pass occupies residues 31 to 55 (FPITMMVTGFVGNALAMLLVSRSYR). Topologically, residues 56 to 68 (RRESKRKKSFLLC) are cytoplasmic. The chain crosses the membrane as a helical span at residues 69 to 89 (IGWLALTDLVGQLLTSPVVIL). The Extracellular segment spans residues 90-108 (VYLSQRRWEQLDPSGRLCT). C107 and C184 are joined by a disulfide. Residues 109–130 (FFGLTMTVFGLSSLLVASAMAV) form a helical membrane-spanning segment. Residues 131-151 (ERALAIRAPHWYASHMKTRAT) lie on the Cytoplasmic side of the membrane. A helical membrane pass occupies residues 152–173 (PVLLGVWLSVLAFALLPVLGVG). The Extracellular segment spans residues 174-203 (RYSVQWPGTWCFISTGPAGNETDPAREPGS). N-linked (GlcNAc...) asparagine glycosylation occurs at N193. A helical membrane pass occupies residues 204–229 (VAFASAFACLGLLALVVTFACNLATI). At 230-259 (KALVSRCRAKAAVSQSSAQWGRITTETAIQ) the chain is on the cytoplasmic side. Residues 260–283 (LMGIMCVLSVCWSPLLIMMLKMIF) traverse the membrane as a helical segment. Topologically, residues 284–303 (NQMSVEQCKTQMGKEKECNS) are extracellular. The helical transmembrane segment at 304–325 (FLIAVRLASLNQILDPWVYLLL) threads the bilayer. Over 326–365 (RKILLRKFCQIRDHTNYASSSTSLPCPGSSALMWSDQLER) the chain is Cytoplasmic.

Belongs to the G-protein coupled receptor 1 family. Interacts (via C-terminus) with MKLN1. Ligand binding is affected by cAMP-dependent phosphorylation in brain membranes. Detected in platelets. Kidney, uterus, and mastocytoma cells, and in a lesser amount in brain, thymus, lung, heart, stomach and spleen.

The protein resides in the cell membrane. In terms of biological role, receptor for prostaglandin E2 (PGE2). Required for normal development of fever in response to pyrinogens, including IL1B, prostaglandin E2 and bacterial lipopolysaccharide (LPS). Required for normal potentiation of platelet aggregation by prostaglandin E2, and thus plays a role in the regulation of blood coagulation. Required for increased HCO3(-) secretion in the duodenum in response to mucosal acidification, and thereby contributes to the protection of the mucosa against acid-induced ulceration. Not required for normal kidney function, normal urine volume and osmolality. Its function is as follows. Receptor for prostaglandin E2 (PGE2); ligand binding activates a signaling cascade via G(i) proteins that leads to inhibition of adenylate cyclase. Shows high agonist-independent constitutive inhibition of adenylate cyclase. Functionally, receptor for prostaglandin E2 (PGE2); ligand binding activates a signaling cascade via G(i) proteins that leads to inhibition of adenylate cyclase. Requires much higher ligand concentrations than isoform Alpha for activation. Does not display agonist-independent constitutive inhibition of adenylate cyclase. Receptor for prostaglandin E2 (PGE2); ligand binding can activate several distinct signaling cascades, resulting in activation or inhibition of adenylate cyclase. This is Prostaglandin E2 receptor EP3 subtype (Ptger3) from Mus musculus (Mouse).